Here is a 358-residue protein sequence, read N- to C-terminus: B3 domain-containing protein Os12g0592300 (358 aa).

Residues 25–122 (RIRFFRLMTG…SFDVLIFDAS (98 aa)) constitute a DNA-binding region (TF-B3 1). The interval 148–215 (YHLSDSEDTS…EKSDDDDEHA (68 aa)) is disordered. Residues 156–181 (TSTPSTFLVGSPHKASTSKKLNGKTK) show a composition bias toward polar residues. The segment covering 203 to 215 (IEEEKSDDDDEHA) has biased composition (acidic residues). Positions 252–350 (FVTVLQAPQI…TMTVHVIGKV (99 aa)) form a DNA-binding region, TF-B3 2.

It localises to the nucleus. The sequence is that of B3 domain-containing protein Os12g0592300 from Oryza sativa subsp. japonica (Rice).